The following is a 137-amino-acid chain: Putative pre-16S rRNA nuclease (137 aa).

It belongs to the YqgF nuclease family.

It is found in the cytoplasm. Its function is as follows. Could be a nuclease involved in processing of the 5'-end of pre-16S rRNA. The polypeptide is Putative pre-16S rRNA nuclease (Bacillus cereus (strain G9842)).